Reading from the N-terminus, the 211-residue chain is Uridine kinase (211 aa).

An ATP-binding site is contributed by 12–19; it reads GGSGSGKT.

This sequence belongs to the uridine kinase family.

The protein localises to the cytoplasm. The catalysed reaction is uridine + ATP = UMP + ADP + H(+). The enzyme catalyses cytidine + ATP = CMP + ADP + H(+). Its pathway is pyrimidine metabolism; CTP biosynthesis via salvage pathway; CTP from cytidine: step 1/3. It participates in pyrimidine metabolism; UMP biosynthesis via salvage pathway; UMP from uridine: step 1/1. In Geobacillus sp. (strain WCH70), this protein is Uridine kinase.